A 384-amino-acid polypeptide reads, in one-letter code: tRNA 2-selenouridine synthase (384 aa).

The region spanning 15–138 is the Rhodanese domain; that stretch reads FVAGKPLIDL…MRQYLIGVIE (124 aa). Catalysis depends on cysteine 98, which acts as the S-selanylcysteine intermediate.

This sequence belongs to the SelU family. Monomer.

It catalyses the reaction 5-methylaminomethyl-2-thiouridine(34) in tRNA + selenophosphate + (2E)-geranyl diphosphate + H2O + H(+) = 5-methylaminomethyl-2-selenouridine(34) in tRNA + (2E)-thiogeraniol + phosphate + diphosphate. The enzyme catalyses 5-methylaminomethyl-2-thiouridine(34) in tRNA + (2E)-geranyl diphosphate = 5-methylaminomethyl-S-(2E)-geranyl-thiouridine(34) in tRNA + diphosphate. The catalysed reaction is 5-methylaminomethyl-S-(2E)-geranyl-thiouridine(34) in tRNA + selenophosphate + H(+) = 5-methylaminomethyl-2-(Se-phospho)selenouridine(34) in tRNA + (2E)-thiogeraniol. It carries out the reaction 5-methylaminomethyl-2-(Se-phospho)selenouridine(34) in tRNA + H2O = 5-methylaminomethyl-2-selenouridine(34) in tRNA + phosphate. In terms of biological role, involved in the post-transcriptional modification of the uridine at the wobble position (U34) of tRNA(Lys), tRNA(Glu) and tRNA(Gln). Catalyzes the conversion of 2-thiouridine (S2U-RNA) to 2-selenouridine (Se2U-RNA). Acts in a two-step process involving geranylation of 2-thiouridine (S2U) to S-geranyl-2-thiouridine (geS2U) and subsequent selenation of the latter derivative to 2-selenouridine (Se2U) in the tRNA chain. The polypeptide is tRNA 2-selenouridine synthase (Shewanella sp. (strain MR-4)).